A 409-amino-acid chain; its full sequence is Peptidase T (409 aa).

Histidine 78 lines the Zn(2+) pocket. Aspartate 80 is a catalytic residue. Aspartate 140 is a binding site for Zn(2+). The active-site Proton acceptor is glutamate 174. Zn(2+)-binding residues include glutamate 175, aspartate 197, and histidine 379.

Belongs to the peptidase M20B family. Requires Zn(2+) as cofactor.

Its subcellular location is the cytoplasm. The enzyme catalyses Release of the N-terminal residue from a tripeptide.. In terms of biological role, cleaves the N-terminal amino acid of tripeptides. The polypeptide is Peptidase T (Aliivibrio salmonicida (strain LFI1238) (Vibrio salmonicida (strain LFI1238))).